The chain runs to 349 residues: 1-acylglycerol-3-phosphate O-acyltransferase ABHD5 (349 aa).

Position 2 is an N-acetylalanine (alanine 2). The region spanning 77–184 (PLVLLHGFGG…LVEPWGFPER (108 aa)) is the AB hydrolase-1 domain. Position 122 is a phosphoserine (serine 122). The HXXXXD motif motif lies at 327–332 (HYVYAD).

This sequence belongs to the peptidase S33 family. ABHD4/ABHD5 subfamily. In terms of assembly, interacts with ADRP, PLIN and PNPLA2. Interacts with PLIN5; promotes interaction with PNPLA2. In terms of tissue distribution, widely expressed in various tissues, including lymphocytes, liver, skeletal muscle and brain. Expressed by upper epidermal layers and dermal fibroblasts in skin, hepatocytes and neurons (at protein level).

Its subcellular location is the cytoplasm. The protein localises to the lipid droplet. The protein resides in the cytosol. It carries out the reaction a 1-acyl-sn-glycero-3-phosphate + an acyl-CoA = a 1,2-diacyl-sn-glycero-3-phosphate + CoA. It catalyses the reaction 1-(9Z-octadecenoyl)-sn-glycero-3-phosphate + hexadecanoyl-CoA = 1-(9Z)-octadecenoyl-2-hexadecanoyl-sn-glycero-3-phosphate + CoA. The catalysed reaction is 1-(9Z-octadecenoyl)-sn-glycero-3-phosphate + octadecanoyl-CoA = 1-(9Z-octadecenoyl)-2-octadecanoyl-sn-glycero-3-phosphate + CoA. The enzyme catalyses 1-(9Z-octadecenoyl)-sn-glycero-3-phosphate + (9Z)-octadecenoyl-CoA = 1,2-di-(9Z-octadecenoyl)-sn-glycero-3-phosphate + CoA. It carries out the reaction 1-(9Z-octadecenoyl)-sn-glycero-3-phosphate + (5Z,8Z,11Z,14Z)-eicosatetraenoyl-CoA = 1-(9Z)-octadecenoyl-2-(5Z,8Z,11Z,14Z)-eicosatetraenoyl-sn-glycero-3-phosphate + CoA. It catalyses the reaction eicosanoyl-CoA + 1-(9Z-octadecenoyl)-sn-glycero-3-phosphate = 1-(9Z)-octadecenoyl-2-eicosanoyl-sn-glycero-3-phosphate + CoA. The catalysed reaction is 1-hexadecanoyl-sn-glycero-3-phosphate + (9Z)-octadecenoyl-CoA = 1-hexadecanoyl-2-(9Z-octadecenoyl)-sn-glycero-3-phosphate + CoA. The enzyme catalyses 1-octadecanoyl-sn-glycero-3-phosphate + (9Z)-octadecenoyl-CoA = 1-octadecanoyl-2-(9Z-octadecenoyl)-sn-glycero-3-phosphate + CoA. It carries out the reaction 1-(5Z,8Z,11Z,14Z-eicosatetraenoyl)-sn-glycero-3-phosphate + (9Z)-octadecenoyl-CoA = 1-(5Z,8Z,11Z,14Z)-eicosatetraenoyl-2-(9Z)-octadecenoyl-sn-glycero-3-phosphate + CoA. Acyltransferase activity is inhibited by detergents such as Triton X-100 and 3-[(3-cholamidopropyl)dimethylammonio]-1-propanesulfonate (CHAPS). Acyltransferase activity is inhibited by the presence of magnesium and calcium. Functionally, coenzyme A-dependent lysophosphatidic acid acyltransferase that catalyzes the transfer of an acyl group on a lysophosphatidic acid. Functions preferentially with 1-oleoyl-lysophosphatidic acid followed by 1-palmitoyl-lysophosphatidic acid, 1-stearoyl-lysophosphatidic acid and 1-arachidonoyl-lysophosphatidic acid as lipid acceptor. Functions preferentially with arachidonoyl-CoA followed by oleoyl-CoA as acyl group donors. Functions in phosphatidic acid biosynthesis. May regulate the cellular storage of triacylglycerol through activation of the phospholipase PNPLA2. Involved in keratinocyte differentiation. Regulates lipid droplet fusion. The protein is 1-acylglycerol-3-phosphate O-acyltransferase ABHD5 of Homo sapiens (Human).